A 350-amino-acid polypeptide reads, in one-letter code: Protein-glutamate methylesterase/protein-glutamine glutaminase 2 (350 aa).

Positions 3-121 (RVLLVDDSPV…DPDYEEAVSE (119 aa)) constitute a Response regulatory domain. Residue Asp54 is modified to 4-aspartylphosphate. Residues 158–322 (IHQDIRVIVI…SFVYGMPGAA (165 aa)) enclose the CheB-type methylesterase domain. Residues Ser170, His197, and Asp290 contribute to the active site.

It belongs to the CheB family. Post-translationally, phosphorylated by CheA. Phosphorylation of the N-terminal regulatory domain activates the methylesterase activity.

It is found in the cytoplasm. The catalysed reaction is [protein]-L-glutamate 5-O-methyl ester + H2O = L-glutamyl-[protein] + methanol + H(+). It carries out the reaction L-glutaminyl-[protein] + H2O = L-glutamyl-[protein] + NH4(+). Its function is as follows. Involved in chemotaxis. Part of a chemotaxis signal transduction system that modulates chemotaxis in response to various stimuli. Catalyzes the demethylation of specific methylglutamate residues introduced into the chemoreceptors (methyl-accepting chemotaxis proteins or MCP) by CheR. Also mediates the irreversible deamidation of specific glutamine residues to glutamic acid. The sequence is that of Protein-glutamate methylesterase/protein-glutamine glutaminase 2 from Methanospirillum hungatei JF-1 (strain ATCC 27890 / DSM 864 / NBRC 100397 / JF-1).